The sequence spans 162 residues: Phosphopantetheine adenylyltransferase (162 aa).

Substrate is bound at residue S9. ATP contacts are provided by residues 9–10 (SF) and H17. Residues K41, T73, and R87 each coordinate substrate. ATP-binding positions include 88–90 (GLR), E98, and 123–129 (YSFISSS).

The protein belongs to the bacterial CoaD family. Homohexamer. Requires Mg(2+) as cofactor.

It is found in the cytoplasm. The enzyme catalyses (R)-4'-phosphopantetheine + ATP + H(+) = 3'-dephospho-CoA + diphosphate. It functions in the pathway cofactor biosynthesis; coenzyme A biosynthesis; CoA from (R)-pantothenate: step 4/5. Functionally, reversibly transfers an adenylyl group from ATP to 4'-phosphopantetheine, yielding dephospho-CoA (dPCoA) and pyrophosphate. The sequence is that of Phosphopantetheine adenylyltransferase from Carboxydothermus hydrogenoformans (strain ATCC BAA-161 / DSM 6008 / Z-2901).